Here is a 400-residue protein sequence, read N- to C-terminus: MKGSLLLAGATLLGCTSAKLHSLKLKKVSLKEQLEHADIDVQIKSLGQKYMGIRPEQHEQQMFKEQTPIEAESGHNVLIDNFLNAQYFSEISIGTPPQTFKVVLDTGSSNLWVPGKDCSSIACFLHSTYDSSASSTYSKNGTKFAIRYGSGSLEGFVSQDSVKIGDMTIKNQLFAEATSEPGLAFAFGRFDGIMGMGFSSISVNGITPPFYNMIDQGLIDEPVFSFYLGDTNKEGDQSVVTFGGSDTKHFTGDMTTIPLRRKAYWEVDFDAISLGEDTAALENTGIILDTGTSLIALPTTLAEMINTQIGATKSWNGQYTLDCAKRDSLPDVTFTVSGHNFTIGPHDYTLEVSGTCISSFMGMDFPEPVGPLAILGDSFLRRYYSVYDLGKGTVGLAKAK.

The first 18 residues, 1-18 (MKGSLLLAGATLLGCTSA), serve as a signal peptide directing secretion. Residues 19–72 (KLHSLKLKKVSLKEQLEHADIDVQIKSLGQKYMGIRPEQHEQQMFKEQTPIEAE) constitute a propeptide, activation peptide. One can recognise a Peptidase A1 domain in the interval 87 to 397 (YFSEISIGTP…DLGKGTVGLA (311 aa)). D105 is a catalytic residue. A disulfide bridge links C118 with C123. N140 is a glycosylation site (N-linked (GlcNAc...) asparagine). D289 is an active-site residue. The cysteines at positions 323 and 356 are disulfide-linked. N340 carries N-linked (GlcNAc...) asparagine glycosylation.

Belongs to the peptidase A1 family.

The protein resides in the vacuole lumen. The protein localises to the secreted. It carries out the reaction Hydrolysis of proteins with broad specificity for peptide bonds. Cleaves -Leu-Leu-|-Val-Tyr- bond in a synthetic substrate. Does not act on esters of Tyr or Arg.. In terms of biological role, vacuolar aspartic endopeptidase which is probably also secreted and contributes to virulence. The polypeptide is Probable vacuolar protease A (PEP2) (Trichophyton verrucosum (strain HKI 0517)).